The chain runs to 387 residues: Pepsin A (387 aa).

Residues 1 to 15 (MKWLLLLSLVALSEC) form the signal peptide. Positions 16-61 (LYKVSLIKKKSLRKNLIEHGLLKDFLKNNTLDPASKYFPQGEAATM) are cleaved as a propeptide — activation peptide. The Peptidase A1 domain maps to 75–384 (YFGTIGIGTP…DRANNQVGLA (310 aa)). Aspartate 93 is a catalytic residue. A disulfide bond links cysteine 106 and cysteine 111. Phosphoserine is present on serine 129. Cysteine 267 and cysteine 271 form a disulfide bridge. Aspartate 276 is a catalytic residue. Cysteine 310 and cysteine 343 are oxidised to a cystine.

The protein belongs to the peptidase A1 family.

It localises to the secreted. It catalyses the reaction Preferential cleavage: hydrophobic, preferably aromatic, residues in P1 and P1' positions. Cleaves 1-Phe-|-Val-2, 4-Gln-|-His-5, 13-Glu-|-Ala-14, 14-Ala-|-Leu-15, 15-Leu-|-Tyr-16, 16-Tyr-|-Leu-17, 23-Gly-|-Phe-24, 24-Phe-|-Phe-25 and 25-Phe-|-Tyr-26 bonds in the B chain of insulin.. Inhibited by pepstatin. Functionally, shows particularly broad specificity; although bonds involving phenylalanine and leucine are preferred, many others are also cleaved to some extent. The protein is Pepsin A (PGA) of Callithrix jacchus (White-tufted-ear marmoset).